A 193-amino-acid polypeptide reads, in one-letter code: ATP-dependent Clp protease proteolytic subunit 1 (193 aa).

Catalysis depends on S98, which acts as the Nucleophile. H123 is an active-site residue.

It belongs to the peptidase S14 family. As to quaternary structure, fourteen ClpP subunits assemble into 2 heptameric rings which stack back to back to give a disk-like structure with a central cavity, resembling the structure of eukaryotic proteasomes.

It localises to the cytoplasm. The catalysed reaction is Hydrolysis of proteins to small peptides in the presence of ATP and magnesium. alpha-casein is the usual test substrate. In the absence of ATP, only oligopeptides shorter than five residues are hydrolyzed (such as succinyl-Leu-Tyr-|-NHMec, and Leu-Tyr-Leu-|-Tyr-Trp, in which cleavage of the -Tyr-|-Leu- and -Tyr-|-Trp bonds also occurs).. Cleaves peptides in various proteins in a process that requires ATP hydrolysis. Has a chymotrypsin-like activity. Plays a major role in the degradation of misfolded proteins. The protein is ATP-dependent Clp protease proteolytic subunit 1 of Bacillus cereus (strain ZK / E33L).